Reading from the N-terminus, the 38-residue chain is Large ribosomal subunit protein bL36 (38 aa).

The protein belongs to the bacterial ribosomal protein bL36 family.

In Stutzerimonas stutzeri (strain A1501) (Pseudomonas stutzeri), this protein is Large ribosomal subunit protein bL36.